Reading from the N-terminus, the 380-residue chain is Cytochrome b (380 aa).

The next 4 helical transmembrane spans lie at 34-54 (FGSLLGICLMTQILTGLLLAM), 78-99 (WLIRNLHANGASFFFICIYLHI), 114-134 (WNTGIILLLTLMATAFVGYVL), and 179-199 (FFALHFLLPFAIAGLTLIHLT). Heme b contacts are provided by His84 and His98. His183 and His197 together coordinate heme b. His202 is an a ubiquinone binding site. The next 4 membrane-spanning stretches (helical) occupy residues 227–247 (LKDILGFTLMFLPLTSLALFS), 289–309 (LGGVLALAASVLVLFLSPFLH), 321–341 (LSQLLFWILVTNLFILTWVGS), and 348–368 (FIIIGQLASVTYFTILLILFP).

It belongs to the cytochrome b family. In terms of assembly, the cytochrome bc1 complex contains 11 subunits: 3 respiratory subunits (MT-CYB, CYC1 and UQCRFS1), 2 core proteins (UQCRC1 and UQCRC2) and 6 low-molecular weight proteins (UQCRH/QCR6, UQCRB/QCR7, UQCRQ/QCR8, UQCR10/QCR9, UQCR11/QCR10 and a cleavage product of UQCRFS1). This cytochrome bc1 complex then forms a dimer. Heme b is required as a cofactor.

The protein localises to the mitochondrion inner membrane. Functionally, component of the ubiquinol-cytochrome c reductase complex (complex III or cytochrome b-c1 complex) that is part of the mitochondrial respiratory chain. The b-c1 complex mediates electron transfer from ubiquinol to cytochrome c. Contributes to the generation of a proton gradient across the mitochondrial membrane that is then used for ATP synthesis. In Thalassoica antarctica (Antarctic petrel), this protein is Cytochrome b (MT-CYB).